Reading from the N-terminus, the 825-residue chain is Tuftelin-interacting protein 11 (825 aa).

Residues 1-135 (MSMSHLYGKD…RTFAGGIKSN (135 aa)) are disordered. Residues 11–25 (EDSDGVEMENFEITD) show a composition bias toward acidic residues. Basic and acidic residues-rich tracts occupy residues 41-61 (QTKE…DERP) and 85-114 (PAAE…EAKK). The span at 122–135 (KPSQRTFAGGIKSN) shows a compositional bias: polar residues. The 47-residue stretch at 145–191 (TKGIGQKLLQKMGYVQGRGLGKNAQGIIAPIEAKQRKGKGAVGAYGS) folds into the G-patch domain.

This sequence belongs to the TFP11/STIP family. In terms of assembly, identified in the spliceosome C complex.

It is found in the nucleus. Involved in pre-mRNA splicing, specifically in spliceosome disassembly during late-stage splicing events. This is Tuftelin-interacting protein 11 (tfip11) from Xenopus tropicalis (Western clawed frog).